The sequence spans 625 residues: Chaperone protein HtpG (625 aa).

An a; substrate-binding region spans residues 1-341 (MEKKQFQAES…SEDLSLNISR (341 aa)). Positions 342–551 (EMLQHDRQLK…DGEITLEMEK (210 aa)) are b. A c region spans residues 552 to 625 (VLQAMPDNQN…FSQNMCKVMV (74 aa)).

The protein belongs to the heat shock protein 90 family. As to quaternary structure, homodimer.

The protein resides in the cytoplasm. In terms of biological role, molecular chaperone. Has ATPase activity. This is Chaperone protein HtpG from Shouchella clausii (strain KSM-K16) (Alkalihalobacillus clausii).